A 117-amino-acid polypeptide reads, in one-letter code: Immunoglobulin lambda variable 2 (117 aa).

The first 19 residues, 1–19 (MAWTSLILSLLALCSGASS), serve as a signal peptide directing secretion. Gln-20 is subject to Pyrrolidone carboxylic acid. Residues 20–117 (QAVVTQESAL…FCALWYSTHF (98 aa)) form the Ig-like domain.

This Mus musculus (Mouse) protein is Immunoglobulin lambda variable 2.